Reading from the N-terminus, the 307-residue chain is MGLSEKVEFKTLDGLVLRGFLYSARAKGPAIVMTPGFNFPVSLLYHEVALGFQAAGITALVYDPRSVGRSDGLPRSDINPAKQSEDFSDAITFLKTKPVVDPKRIALWGYSLSAAAALMAAGLDPRVKLVVAVCPAPVPYNFEAPGKRRKYLDLAIRDRESQARGKEPFYVQYIGDSEETALFDYRKQRGMEELEYDEVVENLTKIAPGFRNEVTIQTLRRLGSWSFADVPQRVGPTPVLQVFAVHEELEHIRKTQEAIWAGLTGPKERHTEDRGHMDVLTPDGHRFAHLVKVQVDFVLKNFAQRMR.

The protein belongs to the polyketide transferase af380 family.

Functionally, thiohydrolase; part of the gene cluster that mediates the biosynthesis of phaeospelide A, a fungal polyene macrolide with a 34-membered macrolactone ring and an all-trans conjugated hexaene structure. The HR-PKS ApmlA uses acetyl-CoA and malonyl-CoA as its starter and extender units, respectively, and provides the large carbon framework in phaeospelide via 16 cycles of polyketide chain elongation, which is the largest number identified in fungal iterative PKSs thus far. During round 1, the KR domain reduces beta -ketone to an L-oriented hydroxy group, while during later rounds, it provides hydroxy groups in the D-configuration. The characteristic conjugated hexaene moiety is built during the later rounds (10-15), when the KR and DH domains are at work but ER is off. Phylogenetic analysis of the DH domain suggests that a polyene formation is programmed in the DH domain. Finally, the mature ACP-tethered carbon chain is transferred to the serine residue of the thiohydrolase apmlB, followed by intramolecular macrolactonization, generating phaeospelide A. When one elongation cycle during rounds 7-9 is skipped, phaeospelide B is biosynthesized instead. The chain is Thiohydrolase apmlB from Arthrinium phaeospermum (Gymnosporium phaeospermum).